A 249-amino-acid chain; its full sequence is Salivary antigen-5 (249 aa).

A signal peptide spans 1 to 26 (MAKTQCPLVFSLLALALIGTLQSSAA). Positions 50–193 (SIHNYYRNLT…WYAGYLVCNY (144 aa)) constitute an SCP domain. N-linked (GlcNAc...) asparagine glycosylation is found at asparagine 57, asparagine 127, and asparagine 168.

Belongs to the CRISP family. Venom allergen 5-like subfamily. Monomeric in solution. Cu(2+) is required as a cofactor. Saliva (at protein level). Salivary gland (at protein level).

Its subcellular location is the secreted. Functionally, antioxidant protein that scavenges superoxide radicals. Removes superoxide radicals produced by PMA-stimulated host neutrophils. Inhibits host platelet aggregation induced by low doses of collagen by interfering with the pro-aggregatory properties of reactive oxygen species on platelets. Binds to heparin and sulfated glycosaminoglycans. The protein is Salivary antigen-5 of Dipetalogaster maximus (Blood-sucking bug).